Consider the following 465-residue polypeptide: Auxin transporter-like protein 3 (465 aa).

Topologically, residues 1–52 are cytoplasmic; that stretch reads MTSEKVETVVAGNYLEMEREEEGSKSTTGKLSKFFWHGGSVYDAWFSCASNQ. A helical membrane pass occupies residues 53 to 70; sequence VAQVLLTLPYSFSQLGML. At 71–72 the chain is on the extracellular side; the sequence is SG. The helical transmembrane segment at 73 to 93 threads the bilayer; the sequence is ILFQIFYGLMGSWTAYIISVL. Residues 94 to 129 lie on the Cytoplasmic side of the membrane; it reads YVEYRTRKEREKVDFRNHVIQWFEVLDGLLGKHWRN. The helical transmembrane segment at 130–150 threads the bilayer; the sequence is LGLFFNCTFLLFGSVIQLIAC. Residues 151–165 are Extracellular-facing; sequence ASNIYYINDHLDKRT. Residues 166–186 traverse the membrane as a helical segment; that stretch reads WTYIFGACCATTVFIPSFHNY. At 187-189 the chain is on the cytoplasmic side; the sequence is RIW. A helical membrane pass occupies residues 190–210; the sequence is SFLGLVMTTYTAWYMTIASIL. The Extracellular portion of the chain corresponds to 211–225; it reads HGQAEDVKHSGPTKL. The chain crosses the membrane as a helical span at residues 226–246; sequence VLYFTGATNILYTFGGHAVTV. Over 247–259 the chain is Cytoplasmic; the sequence is EIMHAMWKPQKFK. The helical transmembrane segment at 260–280 threads the bilayer; sequence MIYLIATLYVMTLTLPSAAAV. Over 281-307 the chain is Extracellular; sequence YWAFGDNLLTHSNALSLLPRTGFRDTA. The chain crosses the membrane as a helical span at residues 308–328; it reads VILMLIHQFITFGFACTPLYF. Over 329 to 349 the chain is Cytoplasmic; it reads VWEKFLGVHETKSLLKRALVR. A helical transmembrane segment spans residues 350-370; sequence LPVVIPIWFLAIIFPFFGPIN. Residues 371-374 lie on the Extracellular side of the membrane; that stretch reads STVG. A helical membrane pass occupies residues 375-395; it reads SLLVSFTVYIIPALAHMVTFA. Over 396 to 421 the chain is Cytoplasmic; the sequence is SAPARENAVERPPSFLGGWVGLYSVN. A helical transmembrane segment spans residues 422–442; that stretch reads VFVAVWVLVVGFGLGGWASML. Over 443–465 the chain is Extracellular; that stretch reads NFVHQIKTFGLFAKCFQCPPHKA.

This sequence belongs to the amino acid/polyamine transporter 2 family. Amino acid/auxin permease (AAAP) (TC 2.A.18.1) subfamily. Shoots and roots of nodulating plants. Low levels in roots, nodules, stems, petioles, leaves, shoot apices and flowers.

Its subcellular location is the cell membrane. Functionally, carrier protein involved in proton-driven auxin influx. Mediates the formation of auxin gradient from developing leaves (site of auxin biosynthesis) to tips by contributing to the loading of auxin in vascular tissues and facilitating acropetal (base to tip) auxin transport within inner tissues of the root apex, and basipetal (tip to base) auxin transport within outer tissues of the root apex. May be involved in lateral roots and nodules formation. The protein is Auxin transporter-like protein 3 (LAX3) of Medicago truncatula (Barrel medic).